A 251-amino-acid chain; its full sequence is Hydroxyacylglutathione hydrolase (251 aa).

Residues His53, His55, Asp57, His58, His110, Asp127, and His165 each contribute to the Zn(2+) site.

The protein belongs to the metallo-beta-lactamase superfamily. Glyoxalase II family. In terms of assembly, monomer. Zn(2+) is required as a cofactor.

The enzyme catalyses an S-(2-hydroxyacyl)glutathione + H2O = a 2-hydroxy carboxylate + glutathione + H(+). The protein operates within secondary metabolite metabolism; methylglyoxal degradation; (R)-lactate from methylglyoxal: step 2/2. Its function is as follows. Thiolesterase that catalyzes the hydrolysis of S-D-lactoyl-glutathione to form glutathione and D-lactic acid. The polypeptide is Hydroxyacylglutathione hydrolase (Yersinia enterocolitica serotype O:8 / biotype 1B (strain NCTC 13174 / 8081)).